The sequence spans 87 residues: Small ribosomal subunit protein bS20 (87 aa).

Over residues 1–15 the composition is skewed to basic residues; the sequence is MANHKSAMKRIKQTA. Residues 1 to 27 are disordered; it reads MANHKSAMKRIKQTAKRTERNKHERST. The span at 16 to 27 shows a compositional bias: basic and acidic residues; it reads KRTERNKHERST.

This sequence belongs to the bacterial ribosomal protein bS20 family.

Binds directly to 16S ribosomal RNA. This Citrifermentans bemidjiense (strain ATCC BAA-1014 / DSM 16622 / JCM 12645 / Bem) (Geobacter bemidjiensis) protein is Small ribosomal subunit protein bS20.